Here is a 499-residue protein sequence, read N- to C-terminus: Probable cytosol aminopeptidase (499 aa).

2 residues coordinate Mn(2+): lysine 263 and aspartate 268. Lysine 275 is a catalytic residue. Aspartate 286, aspartate 345, and glutamate 347 together coordinate Mn(2+). Residue arginine 349 is part of the active site.

The protein belongs to the peptidase M17 family. It depends on Mn(2+) as a cofactor.

Its subcellular location is the cytoplasm. It catalyses the reaction Release of an N-terminal amino acid, Xaa-|-Yaa-, in which Xaa is preferably Leu, but may be other amino acids including Pro although not Arg or Lys, and Yaa may be Pro. Amino acid amides and methyl esters are also readily hydrolyzed, but rates on arylamides are exceedingly low.. The catalysed reaction is Release of an N-terminal amino acid, preferentially leucine, but not glutamic or aspartic acids.. Functionally, presumably involved in the processing and regular turnover of intracellular proteins. Catalyzes the removal of unsubstituted N-terminal amino acids from various peptides. The sequence is that of Probable cytosol aminopeptidase from Bradyrhizobium sp. (strain BTAi1 / ATCC BAA-1182).